Here is a 254-residue protein sequence, read N- to C-terminus: tRNA (guanine-N(1)-)-methyltransferase (254 aa).

S-adenosyl-L-methionine contacts are provided by residues glycine 113 and 133–138; that span reads IGDYVL.

This sequence belongs to the RNA methyltransferase TrmD family. Homodimer.

Its subcellular location is the cytoplasm. It carries out the reaction guanosine(37) in tRNA + S-adenosyl-L-methionine = N(1)-methylguanosine(37) in tRNA + S-adenosyl-L-homocysteine + H(+). In terms of biological role, specifically methylates guanosine-37 in various tRNAs. This chain is tRNA (guanine-N(1)-)-methyltransferase, found in Edwardsiella ictaluri (strain 93-146).